Reading from the N-terminus, the 119-residue chain is Large ribosomal subunit protein bL19 (119 aa).

The protein belongs to the bacterial ribosomal protein bL19 family.

In terms of biological role, this protein is located at the 30S-50S ribosomal subunit interface and may play a role in the structure and function of the aminoacyl-tRNA binding site. The sequence is that of Large ribosomal subunit protein bL19 from Limosilactobacillus reuteri (strain DSM 20016) (Lactobacillus reuteri).